Here is a 458-residue protein sequence, read N- to C-terminus: UDP-N-acetylmuramate--L-alanine ligase (458 aa).

118–124 (GTHGKTT) lines the ATP pocket.

Belongs to the MurCDEF family.

It is found in the cytoplasm. The enzyme catalyses UDP-N-acetyl-alpha-D-muramate + L-alanine + ATP = UDP-N-acetyl-alpha-D-muramoyl-L-alanine + ADP + phosphate + H(+). It participates in cell wall biogenesis; peptidoglycan biosynthesis. Cell wall formation. The sequence is that of UDP-N-acetylmuramate--L-alanine ligase from Clostridium novyi (strain NT).